An 86-amino-acid polypeptide reads, in one-letter code: Exodeoxyribonuclease 7 small subunit (86 aa).

This sequence belongs to the XseB family. In terms of assembly, heterooligomer composed of large and small subunits.

It localises to the cytoplasm. It catalyses the reaction Exonucleolytic cleavage in either 5'- to 3'- or 3'- to 5'-direction to yield nucleoside 5'-phosphates.. In terms of biological role, bidirectionally degrades single-stranded DNA into large acid-insoluble oligonucleotides, which are then degraded further into small acid-soluble oligonucleotides. The sequence is that of Exodeoxyribonuclease 7 small subunit from Agrobacterium fabrum (strain C58 / ATCC 33970) (Agrobacterium tumefaciens (strain C58)).